A 106-amino-acid chain; its full sequence is Large ribosomal subunit protein uL23 (106 aa).

This sequence belongs to the universal ribosomal protein uL23 family. In terms of assembly, part of the 50S ribosomal subunit. Contacts protein L29, and trigger factor when it is bound to the ribosome.

Its function is as follows. One of the early assembly proteins it binds 23S rRNA. One of the proteins that surrounds the polypeptide exit tunnel on the outside of the ribosome. Forms the main docking site for trigger factor binding to the ribosome. In Acinetobacter baylyi (strain ATCC 33305 / BD413 / ADP1), this protein is Large ribosomal subunit protein uL23.